A 364-amino-acid polypeptide reads, in one-letter code: UDP-N-acetylglucosamine--N-acetylmuramyl-(pentapeptide) pyrophosphoryl-undecaprenol N-acetylglucosamine transferase (364 aa).

Residues 10-12 (TGG), Asn124, Arg166, Ser196, and Gln297 each bind UDP-N-acetyl-alpha-D-glucosamine.

The protein belongs to the glycosyltransferase 28 family. MurG subfamily.

The protein localises to the cell membrane. It carries out the reaction di-trans,octa-cis-undecaprenyl diphospho-N-acetyl-alpha-D-muramoyl-L-alanyl-D-glutamyl-meso-2,6-diaminopimeloyl-D-alanyl-D-alanine + UDP-N-acetyl-alpha-D-glucosamine = di-trans,octa-cis-undecaprenyl diphospho-[N-acetyl-alpha-D-glucosaminyl-(1-&gt;4)]-N-acetyl-alpha-D-muramoyl-L-alanyl-D-glutamyl-meso-2,6-diaminopimeloyl-D-alanyl-D-alanine + UDP + H(+). Its pathway is cell wall biogenesis; peptidoglycan biosynthesis. Cell wall formation. Catalyzes the transfer of a GlcNAc subunit on undecaprenyl-pyrophosphoryl-MurNAc-pentapeptide (lipid intermediate I) to form undecaprenyl-pyrophosphoryl-MurNAc-(pentapeptide)GlcNAc (lipid intermediate II). The protein is UDP-N-acetylglucosamine--N-acetylmuramyl-(pentapeptide) pyrophosphoryl-undecaprenol N-acetylglucosamine transferase of Thermoanaerobacter pseudethanolicus (strain ATCC 33223 / 39E) (Clostridium thermohydrosulfuricum).